Consider the following 174-residue polypeptide: Secretory-abundant heat soluble protein 2 (174 aa).

A signal peptide spans 1–19 (MHRFVLALVVFAGAAIVWA). Residues 30–60 (EWTGKPWMGKWESDPSKDENVEEFKKKLQLP) are SAHS-c1. An SAHS-c2 region spans residues 77-105 (YKKGDEYHHKIIINDAHYKNDIVFKLGQE). Asn-111 is a glycosylation site (N-linked (GlcNAc...) asparagine). The interval 118-172 (KYEDKDGALVGSVHYTGTKEQSLDKTINNVFKLEGDHLVKTSTIEGVTMKRHYNK) is SAHS-c3.

It belongs to the Secretory-abundant heat soluble protein (SAHS) family.

It localises to the secreted. In terms of biological role, secreted heat soluble protein acting as a molecular shield in water-deficient condition. Tardigrade-specific intrinsically disordered proteins (TDPs) are essential for desiccation tolerance by forming non-crystalline amorphous solids upon desiccation, and this vitrified state mirrors their protective capabilities. This Ramazzottius varieornatus (Water bear) protein is Secretory-abundant heat soluble protein 2.